Consider the following 1311-residue polypeptide: Transcriptional regulator ATRX homolog (1311 aa).

Positions 1-384 are disordered; sequence MGKKNPNARH…KQKNKRKHIR (384 aa). The span at 28 to 40 shows a compositional bias: basic and acidic residues; that stretch reads SRRESATESKSAS. The segment covering 61-83 has biased composition (low complexity); the sequence is KASGKATVSSSSDSDQAVANSSA. Residues 114 to 125 are compositionally biased toward polar residues; that stretch reads RGSQQKNVTIND. Ser126 and Ser127 each carry phosphoserine. Residues 155-166 show a composition bias toward acidic residues; the sequence is SDSEEVDEEEES. A compositionally biased stretch (basic and acidic residues) spans 181–202; it reads KPEKNSSKASKESIEKRQKAQK. Residues 219–237 show a composition bias toward low complexity; the sequence is RRGSLSSERSSRASSSRAE. Positions 241–265 are enriched in basic residues; that stretch reads RPKRCVVRLKRVSLPKTKPAQKPKK. Phosphoserine occurs at positions 267, 268, and 270. The segment covering 290 to 306 has biased composition (acidic residues); it reads EADSDYEAPAAEEEEEE. 4 positions are modified to phosphoserine: Ser336, Ser338, Ser342, and Ser343. The segment covering 336–351 has biased composition (basic and acidic residues); sequence SESDKGSSDFEPEEKQ. A compositionally biased stretch (basic residues) spans 352–361; sequence KKKGRKRIKK. The Helicase ATP-binding domain occupies 476–664; that stretch reads ESQEKPGSGC…YCMIQFVKPN (189 aa). 489–496 is an ATP binding site; sequence HCMGLGKT. A DEGH box motif is present at residues 615–618; it reads DEGH. The tract at residues 837–878 is disordered; it reads ASSGKVKKRKTRNGNAGGGDSDSDLEMLGGLGGGSSVQKDDP. Residues Ser857 and Ser859 each carry the phosphoserine modification. The Helicase C-terminal domain occupies 905-1085; it reads RLLQQCEAIG…SRHYNQTDLM (181 aa). Positions 1285–1311 are disordered; the sequence is MAGGSVAHGPPAAPAPGFEPDKVYEID.

This sequence belongs to the SNF2/RAD54 helicase family.

It localises to the nucleus. The protein resides in the chromosome. The catalysed reaction is ATP + H2O = ADP + phosphate + H(+). Functionally, global transcriptional regulator. Modifies gene expression by affecting chromatin. This is Transcriptional regulator ATRX homolog (XNP) from Drosophila melanogaster (Fruit fly).